A 1073-amino-acid polypeptide reads, in one-letter code: Pleckstrin homology domain-containing family G member 5 (1073 aa).

Disordered stretches follow at residues 1 to 28 (MGTG…SQLL), 91 to 135 (VSTR…ARRR), 217 to 261 (PGDE…ESSL), 278 to 309 (GEAG…GINE), and 367 to 388 (SWEE…RLED). 2 stretches are compositionally biased toward basic and acidic residues: residues 217–231 (PGDE…KDSK) and 249–260 (ERVDPQSRRESS). A compositionally biased stretch (acidic residues) spans 367–381 (SWEEEEEDDEEDEES). In terms of domain architecture, DH spans 406–598 (HQQEAVWELL…ERFIHHVNTC (193 aa)). The region spanning 654-754 (QLLLEGSLRM…WVDTIYNAQN (101 aa)) is the PH domain. Disordered regions lie at residues 762-818 (QLSA…TSDG), 833-873 (TLSS…GPVD), and 899-925 (PVVE…TPVQ). Acidic residues predominate over residues 777–790 (LEEEEDEQEEEGEE). 2 stretches are compositionally biased toward polar residues: residues 791 to 809 (SGTS…SNSL) and 844 to 864 (VSSQ…TPTS). T793 carries the post-translational modification Phosphothreonine. S798 is subject to Phosphoserine. Residues 900–915 (VVEPAPVPQTPSPQPS) are compositionally biased toward pro residues. T909 carries the phosphothreonine modification. Phosphoserine is present on residues S911, S936, and S941. Residues 993–1046 (MCDPCHGPQLSESENRPSHMTGGPADSARRRCREMPSGTMSRVQSEPPSGVSAQ) form a disordered region. The segment covering 1030–1039 (GTMSRVQSEP) has biased composition (polar residues).

As to quaternary structure, interacts with GIPC1/synectin and RHOA. In terms of tissue distribution, expressed in neurons and glial cells of the peripheral nervous system, with highest levels of expression in the brain and sciatic nerve endoneurium. Isoform 2 is expressed at detectable levels only in malignant cells.

The protein resides in the cytoplasm. It is found in the perinuclear region. Its subcellular location is the cell membrane. The protein localises to the cell junction. It localises to the cell projection. The protein resides in the lamellipodium. Its function is as follows. Functions as a guanine exchange factor (GEF) for RAB26 and thus regulates autophagy of synaptic vesicles in axon terminal of motoneurons. Involved in the control of neuronal cell differentiation. Plays a role in angiogenesis through regulation of endothelial cells chemotaxis. Also affects the migration, adhesion, and matrix/bone degradation in macrophages and osteoclasts. The sequence is that of Pleckstrin homology domain-containing family G member 5 (Plekhg5) from Mus musculus (Mouse).